Reading from the N-terminus, the 482-residue chain is Anaerobic nitric oxide reductase flavorubredoxin (482 aa).

Positions 30-210 are zinc metallo-hydrolase; it reads LRGSSYNSYL…PFSRLVTPKI (181 aa). Fe cation is bound by residues H79, E81, D83, H147, D166, and H227. The Flavodoxin-like domain occupies 254–393; that stretch reads ITIFYDTMSN…LCRQHGRDIA (140 aa). Residues 260–264 and 342–369 each bind FMN; these read TMSNN and AFGS…EMSL. The 52-residue stretch at 426–477 folds into the Rubredoxin-like domain; the sequence is GPMMQCSVCQWVYDPAKGEPNQDVQPGTPWSEVPDNFLCPECSLGKDVFDVL. Fe cation-binding residues include C431, C434, C464, and C467.

It in the N-terminal section; belongs to the zinc metallo-hydrolase group 3 family. In terms of assembly, homotetramer. Requires Fe cation as cofactor. FMN is required as a cofactor.

The protein resides in the cytoplasm. It participates in nitrogen metabolism; nitric oxide reduction. Its function is as follows. Anaerobic nitric oxide reductase; uses NADH to detoxify nitric oxide (NO), protecting several 4Fe-4S NO-sensitive enzymes. Has at least 2 reductase partners, only one of which (NorW, flavorubredoxin reductase) has been identified. NO probably binds to the di-iron center; electrons enter from the NorW at rubredoxin and are transferred sequentially to the FMN center and the di-iron center. Also able to function as an aerobic oxygen reductase. In Klebsiella pneumoniae subsp. pneumoniae (strain ATCC 700721 / MGH 78578), this protein is Anaerobic nitric oxide reductase flavorubredoxin.